The primary structure comprises 141 residues: Galactose-6-phosphate isomerase subunit LacA 1 (141 aa).

The protein belongs to the LacAB/RpiB family. Heteromultimeric protein consisting of LacA and LacB.

The catalysed reaction is aldehydo-D-galactose 6-phosphate = keto-D-tagatose 6-phosphate. It functions in the pathway carbohydrate metabolism; D-galactose 6-phosphate degradation; D-tagatose 6-phosphate from D-galactose 6-phosphate: step 1/1. This chain is Galactose-6-phosphate isomerase subunit LacA 1, found in Streptococcus agalactiae serotype III (strain NEM316).